The sequence spans 430 residues: Tol-Pal system protein TolB (430 aa).

The first 21 residues, 1–21 (MKQALRVAVSFFMLWAAVLHA), serve as a signal peptide directing secretion.

This sequence belongs to the TolB family. In terms of assembly, the Tol-Pal system is composed of five core proteins: the inner membrane proteins TolA, TolQ and TolR, the periplasmic protein TolB and the outer membrane protein Pal. They form a network linking the inner and outer membranes and the peptidoglycan layer.

The protein localises to the periplasm. In terms of biological role, part of the Tol-Pal system, which plays a role in outer membrane invagination during cell division and is important for maintaining outer membrane integrity. TolB occupies a key intermediary position in the Tol-Pal system because it communicates directly with both membrane-embedded components, Pal in the outer membrane and TolA in the inner membrane. This Enterobacter sp. (strain 638) protein is Tol-Pal system protein TolB.